The following is a 729-amino-acid chain: 1,4-alpha-glucan branching enzyme GlgB (729 aa).

Aspartate 408 acts as the Nucleophile in catalysis. Glutamate 461 serves as the catalytic Proton donor.

This sequence belongs to the glycosyl hydrolase 13 family. GlgB subfamily. Monomer.

The catalysed reaction is Transfers a segment of a (1-&gt;4)-alpha-D-glucan chain to a primary hydroxy group in a similar glucan chain.. It participates in glycan biosynthesis; glycogen biosynthesis. Functionally, catalyzes the formation of the alpha-1,6-glucosidic linkages in glycogen by scission of a 1,4-alpha-linked oligosaccharide from growing alpha-1,4-glucan chains and the subsequent attachment of the oligosaccharide to the alpha-1,6 position. This is 1,4-alpha-glucan branching enzyme GlgB from Vibrio cholerae serotype O1 (strain ATCC 39315 / El Tor Inaba N16961).